The following is a 69-amino-acid chain: DNA gyrase inhibitor YacG (69 aa).

Zn(2+) is bound by residues C7, C10, C26, and C30.

This sequence belongs to the DNA gyrase inhibitor YacG family. As to quaternary structure, interacts with GyrB. The cofactor is Zn(2+).

Functionally, inhibits all the catalytic activities of DNA gyrase by preventing its interaction with DNA. Acts by binding directly to the C-terminal domain of GyrB, which probably disrupts DNA binding by the gyrase. The protein is DNA gyrase inhibitor YacG of Shewanella baltica (strain OS155 / ATCC BAA-1091).